We begin with the raw amino-acid sequence, 369 residues long: Protein pxr-1 (369 aa).

Positions 1–23 (MGLAAAKNKRKLGTDPNNTKWSR) are disordered. The G-patch domain maps to 25–79 (ETTFGQKILRAQGWQPGEFLGAKDAAHAVHHTEASSSHIKVTLKDDNLGLGAKRN). The disordered stretch occupies residues 147 to 338 (EEDGVPQSDT…GTSTPTVTSS (192 aa)). Residues 153–167 (QSDTVDQQVETVPSQ) are compositionally biased toward polar residues. The span at 218–227 (SKKKEKKDKK) shows a compositional bias: basic residues. A compositionally biased stretch (basic and acidic residues) spans 228-237 (EKKDQKEKKD). The span at 267–292 (KSKKDKKKEKKEKKDKKKDKKEKKRK) shows a compositional bias: basic residues. Positions 304–318 (EDSKSKAQKRTKDGA) are enriched in basic and acidic residues. Positions 322 to 338 (TSTPGGSGTSTPTVTSS) are enriched in low complexity.

This sequence belongs to the PINX1 family.

It is found in the nucleus. It localises to the nucleolus. Its function is as follows. Involved in rRNA-processing at A0, A1 and A2 sites and negatively regulates telomerase. This chain is Protein pxr-1 (pxr-1), found in Neurospora crassa (strain ATCC 24698 / 74-OR23-1A / CBS 708.71 / DSM 1257 / FGSC 987).